Here is a 154-residue protein sequence, read N- to C-terminus: Endoribonuclease YbeY (154 aa).

The Zn(2+) site is built by H116, H120, and H126.

It belongs to the endoribonuclease YbeY family. Requires Zn(2+) as cofactor.

It is found in the cytoplasm. Functionally, single strand-specific metallo-endoribonuclease involved in late-stage 70S ribosome quality control and in maturation of the 3' terminus of the 16S rRNA. The protein is Endoribonuclease YbeY of Buchnera aphidicola subsp. Baizongia pistaciae (strain Bp).